Consider the following 202-residue polypeptide: Response regulator RamR (202 aa).

The response regulatory stretch occupies residues 1 to 121 (MGEMVRIAVV…LITAVHTVAR (121 aa)). Positions 135 to 200 (LKGAEMPLTT…DAIRIVQSAG (66 aa)) constitute an HTH luxR-type domain. The segment at residues 159 to 178 (IAEIAARLHLSRGTVRNYMA) is a DNA-binding region (H-T-H motif).

As to quaternary structure, homodimer, in the absence of phosphorylation. In terms of processing, may be phosphorylated by an unknown kinase, probably on Asp-56.

A transcription factor required for aerial hyphae formation on rich medium. Activates transcription of ramC. Might be part of a two-component regulatory system. Binds the promoter of ramC. Non-phosphorylated protein cooperatively binds multiple sites in the ramC promoter. Has not been seen to autophosphorylate using the small molecule phosphodonors phosphoramidate, acetyl phosphate or carbamoyl phosphate. Upon low expression suppresses the bald (bld, no aerial hyphae) phenotype of citA but not bldJ mutants; higher expression also suppresses the bldJ mutant as well as several other bld mutations, inducing SapB production even on media where SapB is normally not produced. Expression of the ram locus (ramA, ramB and ramR) induces rapid aerial mycelium formation in S.lividans. Overexpression suppresses the no aerial hyphae phenotype of a chaplin-negative strain, probably by inducing expression of SapB. Overexpression of RamR show there are about 280 genes having at least a threefold increase or fourfold decrease in RNA abundance versus wild-type including gene cluster SCO4072-SCO4075. The polypeptide is Response regulator RamR (Streptomyces coelicolor (strain ATCC BAA-471 / A3(2) / M145)).